Consider the following 654-residue polypeptide: Neuroendocrine convertase 2 (654 aa).

The signal sequence occupies residues 1 to 21; sequence MAAATWSWLLAPFLLLHWASA. Positions 22–121 are excised as a propeptide; sequence GAGGGAGGSG…VQQPGFKRVK (100 aa). The 326-residue stretch at 158–483 folds into the Peptidase S8 domain; it reads QWYLKNTGQN…FGVLDAGAMV (326 aa). N-linked (GlcNAc...) asparagine glycosylation occurs at N189. Catalysis depends on charge relay system residues D196 and H237. Intrachain disulfides connect C254/C404 and C346/C376. An N-linked (GlcNAc...) asparagine glycan is attached at N312. The active-site Charge relay system is the S412. The P/Homo B domain occupies 491 to 627; sequence SVPPRYHCEA…SLVLHGTKEA (137 aa). An intrachain disulfide couples C498 to C524. N-linked (GlcNAc...) asparagine glycosylation occurs at N544.

The protein belongs to the peptidase S8 family. Furin subfamily. As to expression, expressed in the central nervous system (CNS) and midgut endocrine cells of third instar larva (at protein level). In the CNS, expressed in the CA-LP1 and CA-LP2 neurons which innervate the corpus allatum, and in the CC-MS2 neurons which innervate the corpora cardiaca of the ring gland. Also expressed in the CC-MS1, SP3, Tv and Va neurons. Expressed in Akh-producing cells of the corpora cardiaca. In the embryo, restricted to the final stages of embryogenesis where expression is found in anterior sensory structures and in only 168 cells in the brain and ventral nerve cord. After larvae hatch, the sensory structures and most cells in the CNS turn off or substantially reduce expression. In third instar larva, expressed at higher levels in the anterior section than in the posterior section. Little expression is detected in the adult head. In the developing eye, expressed at higher levels in pale-type R7 photoreceptor cells than in yellow-type R7 cells although expression is not seen in all pale-type R7 cells. Also expressed in outer photoreceptor cells.

It is found in the secreted. The enzyme catalyses Release of protein hormones and neuropeptides from their precursors, generally by hydrolysis of -Lys-Arg-|- bonds.. Its function is as follows. Serine endopeptidase which is involved in the processing of hormone and other protein precursors at sites comprised of pairs of basic amino acid residues. Required during embryonic and larval development, probably by proteolytically processing peptide hormones involved in hatching, larval growth and larval molting. Required for the processing and activation of Akh which maintains normal hemolymph sugar levels. Has been shown in one study to be required for processing of sli into slit N-product and slit C-product in the embryo which is necessary for lateral transverse muscle elongation but has been shown in another study not to be required for sli cleavage. Required for larval hatching. Also required for normal larval wandering behavior which occurs prior to pupariation. Required during pupal development for head eversion, leg and wing disk extension, and abdominal differentiation. Required during eye development for R8 photoreceptor cell specification by regulating processing of ligands required for the BMP and activin signaling pathways. This is Neuroendocrine convertase 2 from Drosophila melanogaster (Fruit fly).